Here is a 258-residue protein sequence, read N- to C-terminus: tRNA pseudouridine synthase A (258 aa).

The active-site Nucleophile is D53. Y111 is a binding site for substrate.

It belongs to the tRNA pseudouridine synthase TruA family. Homodimer.

It catalyses the reaction uridine(38/39/40) in tRNA = pseudouridine(38/39/40) in tRNA. Functionally, formation of pseudouridine at positions 38, 39 and 40 in the anticodon stem and loop of transfer RNAs. The chain is tRNA pseudouridine synthase A from Streptococcus agalactiae serotype V (strain ATCC BAA-611 / 2603 V/R).